The primary structure comprises 343 residues: Cytoplasmic tRNA 2-thiolation protein 1 (343 aa).

It belongs to the TtcA family. CTU1/NCS6/ATPBD3 subfamily.

It localises to the cytoplasm. It functions in the pathway tRNA modification; 5-methoxycarbonylmethyl-2-thiouridine-tRNA biosynthesis. Functionally, plays a central role in 2-thiolation of mcm(5)S(2)U at tRNA wobble positions of tRNA(Lys), tRNA(Glu) and tRNA(Gln). Directly binds tRNAs and probably acts by catalyzing adenylation of tRNAs, an intermediate required for 2-thiolation. It is unclear whether it acts as a sulfurtransferase that transfers sulfur from thiocarboxylated URM1 onto the uridine of tRNAs at wobble position. In Drosophila grimshawi (Hawaiian fruit fly), this protein is Cytoplasmic tRNA 2-thiolation protein 1.